The sequence spans 919 residues: Glutamate receptor ionotropic, kainate 3 (919 aa).

An N-terminal signal peptide occupies residues 1–31 (MTAPWRRLRSLVWEYWAGFLVCAFWIPDSRG). Topologically, residues 32 to 563 (MPHVIRIGGI…VFSFLNPLSP (532 aa)) are extracellular. Residues N70, N76, N278, N381, N415, N426, and N433 are each glycosylated (N-linked (GlcNAc...) asparagine). The cysteines at positions 99 and 350 are disulfide-linked. Residues P518, T520, and R525 each coordinate L-glutamate. Residues N548 and N551 are each glycosylated (N-linked (GlcNAc...) asparagine). The chain crosses the membrane as a helical span at residues 564-584 (DIWMYVLLAYLGVSCVLFVIA). At 585 to 636 (RFSPYEWYDAHPCNPGSEVVENNFTLLNSFWFGMGSLMQQGSELMPKALSTR) the chain is on the cytoplasmic side. A helical transmembrane segment spans residues 637–657 (IIGGIWWFFTLIIISSYTANL). Topologically, residues 658–820 (AAFLTVERME…KEASALGIQK (163 aa)) are extracellular. L-glutamate contacts are provided by A691, T692, and E739. N752 is a glycosylation site (N-linked (GlcNAc...) asparagine). The helical transmembrane segment at 821–841 (IGGIFIVLAAGLVLSVLVAVG) threads the bilayer. Topologically, residues 842–919 (EFIYKLRKTA…CSTSLAPVFP (78 aa)) are cytoplasmic. S869 is subject to Phosphoserine. Residue K887 forms a Glycyl lysine isopeptide (Lys-Gly) (interchain with G-Cter in SUMO1) linkage.

This sequence belongs to the glutamate-gated ion channel (TC 1.A.10.1) family. GRIK3 subfamily. As to quaternary structure, homotetramer, and heterotetramer with either GRIK4 or GRIK5. Can form functional heteromeric receptors with GRIK2. Interacts with PRKCABP. Interacts with NETO2. In terms of tissue distribution, detected in whole brain, cerebellum, brain cortex and hippocampus.

It localises to the cell membrane. The protein resides in the postsynaptic cell membrane. It catalyses the reaction Ca(2+)(in) = Ca(2+)(out). Glutamate-gated receptor activity inhibited by spermine. Functionally, ionotropic glutamate receptor that functions as a cation-permeable ligand-gated ion channel, gated by L-glutamate and the glutamatergic agonist kainic acid. Binding of the excitatory neurotransmitter L-glutamate induces a conformation change, leading to the opening of the cation channel, and thereby converts the chemical signal to an electrical impulse. The receptor then desensitizes rapidly and enters a transient inactive state, characterized by the presence of bound agonist. In association with GRIK2, involved in presynaptic facilitation of glutamate release at hippocampal mossy fiber synapses. This is Glutamate receptor ionotropic, kainate 3 (Grik3) from Mus musculus (Mouse).